Reading from the N-terminus, the 324-residue chain is Glyoxylate/hydroxypyruvate reductase B (324 aa).

Active-site residues include Arg237 and Glu266. The Proton donor role is filled by His285.

The protein belongs to the D-isomer specific 2-hydroxyacid dehydrogenase family. GhrB subfamily. Homodimer.

The protein resides in the cytoplasm. The enzyme catalyses glycolate + NADP(+) = glyoxylate + NADPH + H(+). It catalyses the reaction (R)-glycerate + NAD(+) = 3-hydroxypyruvate + NADH + H(+). The catalysed reaction is (R)-glycerate + NADP(+) = 3-hydroxypyruvate + NADPH + H(+). Its function is as follows. Catalyzes the NADPH-dependent reduction of glyoxylate and hydroxypyruvate into glycolate and glycerate, respectively. In Shigella flexneri, this protein is Glyoxylate/hydroxypyruvate reductase B.